A 450-amino-acid chain; its full sequence is GTPase Der (450 aa).

2 EngA-type G domains span residues 3–170 and 183–356; these read PTIA…LATG and LKIA…AECS. Residues 9–16, 56–60, 122–125, 189–196, 236–240, and 301–304 contribute to the GTP site; these read GRPNVGKS, DTGGL, NKVD, GRPNAGKS, DTAGV, and NKID. Residues 357–441 form the KH-like domain; that stretch reads LRISTGQLNR…PLNIVFRSTF (85 aa).

This sequence belongs to the TRAFAC class TrmE-Era-EngA-EngB-Septin-like GTPase superfamily. EngA (Der) GTPase family. In terms of assembly, associates with the 50S ribosomal subunit.

Its function is as follows. GTPase that plays an essential role in the late steps of ribosome biogenesis. This chain is GTPase Der, found in Maridesulfovibrio salexigens (strain ATCC 14822 / DSM 2638 / NCIMB 8403 / VKM B-1763) (Desulfovibrio salexigens).